A 425-amino-acid polypeptide reads, in one-letter code: Dihydroorotase (425 aa).

Zn(2+) contacts are provided by histidine 56 and histidine 58. Substrate is bound by residues 58 to 60 (HYR) and asparagine 90. 3 residues coordinate Zn(2+): aspartate 148, histidine 175, and histidine 228. Asparagine 274 contacts substrate. A Zn(2+)-binding site is contributed by aspartate 301. Residue aspartate 301 is part of the active site. Substrate contacts are provided by residues histidine 305 and 319–320 (FG).

It belongs to the metallo-dependent hydrolases superfamily. DHOase family. Class I DHOase subfamily. Zn(2+) serves as cofactor.

It catalyses the reaction (S)-dihydroorotate + H2O = N-carbamoyl-L-aspartate + H(+). Its pathway is pyrimidine metabolism; UMP biosynthesis via de novo pathway; (S)-dihydroorotate from bicarbonate: step 3/3. In terms of biological role, catalyzes the reversible cyclization of carbamoyl aspartate to dihydroorotate. The sequence is that of Dihydroorotase from Lactobacillus acidophilus (strain ATCC 700396 / NCK56 / N2 / NCFM).